Consider the following 593-residue polypeptide: La-related protein 7 (593 aa).

Positions 1 to 11 are enriched in polar residues; that stretch reads MTAIETDTPSN. The segment at 1-28 is disordered; it reads MTAIETDTPSNKVKEDESTDLRKDREKK. Residues 12 to 24 are compositionally biased toward basic and acidic residues; that stretch reads KVKEDESTDLRKD. The HTH La-type RNA-binding domain occupies 30–121; sequence RSRVKQLLAD…RRRFPLGEKP (92 aa). In terms of domain architecture, RRM spans 127–205; it reads RTVYVELLPK…PRKAGMFPKT (79 aa). The disordered stretch occupies residues 191–363; that stretch reads PPEEAPRKAG…STEEEKDAVD (173 aa). Residues 231–240 show a composition bias toward basic residues; it reads KKKKKKKSKA. The span at 248-259 shows a compositional bias: acidic residues; sequence AEEDTKEQDMDI. Basic and acidic residues-rich tracts occupy residues 295 to 307, 314 to 340, and 348 to 363; these read ERAE…EKVR, SSSE…DEKP, and QECK…DAVD. The xRRM domain maps to 461–574; the sequence is QFVCGVIGKI…TEKLIAKAEK (114 aa).

Belongs to the LARP7 family. In terms of assembly, core component of the 7SK RNP complex. Associates with box C/D small nucleolar ribonucleoprotein (snoRNP) complexes.

The protein resides in the nucleus. The protein localises to the nucleoplasm. RNA-binding protein that specifically binds distinct small nuclear RNA (snRNAs) and regulates their processing and function. Specifically binds the 7SK snRNA (7SK RNA) and acts as a core component of the 7SK ribonucleoprotein (RNP) complex, thereby acting as a negative regulator of transcription elongation by RNA polymerase II. The 7SK RNP complex sequesters the positive transcription elongation factor b (P-TEFb) in a large inactive 7SK RNP complex preventing RNA polymerase II phosphorylation and subsequent transcriptional elongation. The 7SK RNP complex also promotes snRNA gene transcription by RNA polymerase II via interaction with the little elongation complex (LEC). LARP7 specifically binds to the highly conserved 3'-terminal U-rich stretch of 7SK RNA; on stimulation, remains associated with 7SK RNA, whereas P-TEFb is released from the complex. LARP7 also acts as a regulator of mRNA splicing fidelity by promoting U6 snRNA processing. Specifically binds U6 snRNAs and associates with a subset of box C/D RNP complexes: promotes U6 snRNA 2'-O-methylation by facilitating U6 snRNA loading into box C/D RNP complexes. U6 snRNA 2'-O-methylation is required for mRNA splicing fidelity. The protein is La-related protein 7 of Xenopus tropicalis (Western clawed frog).